The primary structure comprises 401 residues: MEKKKVVLAYSGGLDTSVAIKWLQEKNYDIIALCLDLGEGKDLAFVKEKALSVGAIKSYMIDVQEEFANEYALMAMQAHTLYEGKYPLVSALSRPLIAKKLVEIAEQEGATAVAHGCTGKGNDQVRFEVSIQALNPYLEVIAPVREWKWSREEEIAYAKENDVPIPINLDSPFSIDQNLWGRSNECGILEDPWAAPPEDAYEMTLALEDTPNKPEFVEIGFEAGVPTTLNGTAYSLAELIKTLNALAGKHGVGRIDHVENRLVGIKSREVYECPAAMTLITAHKELEDLTHVKEVAHFKPVIEQKITELIYNGLWFSPLKQALHAFLQETQKNVTGTVRVKLFKGHAIVEGRKSEYSLYDEKLATYTAQDEFNHDAAVGFISLFGLPTKVYSQVNQKKVEA.

Ala9–Ser17 contacts ATP. Residue Tyr86 participates in L-citrulline binding. Position 116 (Gly116) interacts with ATP. The L-aspartate site is built by Thr118, Asn122, and Asp123. L-citrulline is bound at residue Asn122. 5 residues coordinate L-citrulline: Arg126, Ser174, Ser183, Glu259, and Tyr271.

It belongs to the argininosuccinate synthase family. Type 1 subfamily. Homotetramer.

The protein localises to the cytoplasm. The enzyme catalyses L-citrulline + L-aspartate + ATP = 2-(N(omega)-L-arginino)succinate + AMP + diphosphate + H(+). The protein operates within amino-acid biosynthesis; L-arginine biosynthesis; L-arginine from L-ornithine and carbamoyl phosphate: step 2/3. The chain is Argininosuccinate synthase from Bacillus cereus (strain B4264).